A 370-amino-acid chain; its full sequence is Elongation factor Ts, mitochondrial (370 aa).

The transit peptide at 1–29 directs the protein to the mitochondrion; the sequence is MALLSAAPRALRLPRRLPLGAALPALRAL.

It belongs to the EF-Ts family.

The protein resides in the mitochondrion. Associates with the EF-Tu.GDP complex and induces the exchange of GDP to GTP. It remains bound to the aminoacyl-tRNA.EF-Tu.GTP complex up to the GTP hydrolysis stage on the ribosome. The sequence is that of Elongation factor Ts, mitochondrial from Cryptococcus neoformans var. neoformans serotype D (strain B-3501A) (Filobasidiella neoformans).